Here is a 159-residue protein sequence, read N- to C-terminus: Transcription elongation factor GreA (159 aa).

This sequence belongs to the GreA/GreB family.

Functionally, necessary for efficient RNA polymerase transcription elongation past template-encoded arresting sites. The arresting sites in DNA have the property of trapping a certain fraction of elongating RNA polymerases that pass through, resulting in locked ternary complexes. Cleavage of the nascent transcript by cleavage factors such as GreA or GreB allows the resumption of elongation from the new 3'terminus. GreA releases sequences of 2 to 3 nucleotides. The chain is Transcription elongation factor GreA from Orientia tsutsugamushi (strain Ikeda) (Rickettsia tsutsugamushi).